The primary structure comprises 363 residues: S-adenosylmethionine:tRNA ribosyltransferase-isomerase (363 aa).

The protein belongs to the QueA family. In terms of assembly, monomer.

The protein resides in the cytoplasm. The enzyme catalyses 7-aminomethyl-7-carbaguanosine(34) in tRNA + S-adenosyl-L-methionine = epoxyqueuosine(34) in tRNA + adenine + L-methionine + 2 H(+). The protein operates within tRNA modification; tRNA-queuosine biosynthesis. Functionally, transfers and isomerizes the ribose moiety from AdoMet to the 7-aminomethyl group of 7-deazaguanine (preQ1-tRNA) to give epoxyqueuosine (oQ-tRNA). The sequence is that of S-adenosylmethionine:tRNA ribosyltransferase-isomerase from Pasteurella multocida (strain Pm70).